The chain runs to 121 residues: Small ribosomal subunit protein uS13 (121 aa).

Positions 92-121 (RKGLPVRGQSSKTNARTVKGPRKTVANKKK) are disordered. Residues 110–121 (KGPRKTVANKKK) show a composition bias toward basic residues.

Belongs to the universal ribosomal protein uS13 family. Part of the 30S ribosomal subunit. Forms a loose heterodimer with protein S19. Forms two bridges to the 50S subunit in the 70S ribosome.

Located at the top of the head of the 30S subunit, it contacts several helices of the 16S rRNA. In the 70S ribosome it contacts the 23S rRNA (bridge B1a) and protein L5 of the 50S subunit (bridge B1b), connecting the 2 subunits; these bridges are implicated in subunit movement. Contacts the tRNAs in the A and P-sites. This is Small ribosomal subunit protein uS13 from Mycoplasma capricolum subsp. capricolum (strain California kid / ATCC 27343 / NCTC 10154).